We begin with the raw amino-acid sequence, 765 residues long: Alpha,alpha-trehalose phosphorylase (765 aa).

352–353 (WD) provides a ligand contact to substrate. Glu479 functions as the Proton donor in the catalytic mechanism. 591–592 (KQ) lines the substrate pocket.

It belongs to the glycosyl hydrolase 65 family. Homodimer.

It carries out the reaction alpha,alpha-trehalose + phosphate = beta-D-glucose 1-phosphate + D-glucose. It participates in glycan degradation; trehalose degradation. Functionally, catalyzes the reversible phosphorolytic cleavage of trehalose. Phosphorolysis is specific for trehalose. This is Alpha,alpha-trehalose phosphorylase (treP) from Geobacillus stearothermophilus (Bacillus stearothermophilus).